The primary structure comprises 487 residues: ATP-dependent RNA helicase DBP3 (487 aa).

The disordered stretch occupies residues 1 to 40 (MAKRSRNMESNSERSSRPKKKSKGDAKPEQPPYVQSAELD). The Q motif motif lies at 71–98 (TAFSYLPSDSNQLYGPLEHFSKPTPIQS). A Helicase ATP-binding domain is found at 101-276 (WPYLFAGRDV…TTFMKEPVTV (176 aa)). 114–121 (AETGSGKT) contributes to the ATP binding site. Positions 222–225 (DEAD) match the DEAD box motif. Positions 291 to 456 (RIKQIVEVVK…DIPEALLKFG (166 aa)) constitute a Helicase C-terminal domain.

It belongs to the DEAD box helicase family. DDX5/DBP2 subfamily.

The protein localises to the nucleus. Its subcellular location is the nucleolus. It carries out the reaction ATP + H2O = ADP + phosphate + H(+). Its function is as follows. ATP-dependent RNA helicase required for 60S ribosomal subunit synthesis. Involved in efficient pre-rRNA processing, predominantly at site A3, which is necessary for the normal formation of 25S and 5.8S rRNAs. The protein is ATP-dependent RNA helicase DBP3 (DBP3) of Ajellomyces capsulatus (strain NAm1 / WU24) (Darling's disease fungus).